Reading from the N-terminus, the 385-residue chain is DNA replication and repair protein RecF (385 aa).

30 to 37 is an ATP binding site; sequence GANAAGKT.

This sequence belongs to the RecF family.

It localises to the cytoplasm. Its function is as follows. The RecF protein is involved in DNA metabolism; it is required for DNA replication and normal SOS inducibility. RecF binds preferentially to single-stranded, linear DNA. It also seems to bind ATP. This is DNA replication and repair protein RecF from Herpetosiphon aurantiacus (strain ATCC 23779 / DSM 785 / 114-95).